The sequence spans 276 residues: NH(3)-dependent NAD(+) synthetase (276 aa).

43–50 is an ATP binding site; the sequence is GISGGVDS. Aspartate 49 is a Mg(2+) binding site. Arginine 146 lines the deamido-NAD(+) pocket. Threonine 166 contacts ATP. Glutamate 171 serves as a coordination point for Mg(2+). 2 residues coordinate deamido-NAD(+): lysine 179 and aspartate 186. Residues lysine 195 and threonine 217 each coordinate ATP. 266-267 is a deamido-NAD(+) binding site; sequence HK.

It belongs to the NAD synthetase family. Homodimer.

The enzyme catalyses deamido-NAD(+) + NH4(+) + ATP = AMP + diphosphate + NAD(+) + H(+). It functions in the pathway cofactor biosynthesis; NAD(+) biosynthesis; NAD(+) from deamido-NAD(+) (ammonia route): step 1/1. In terms of biological role, catalyzes the ATP-dependent amidation of deamido-NAD to form NAD. Uses ammonia as a nitrogen source. The chain is NH(3)-dependent NAD(+) synthetase from Vibrio parahaemolyticus serotype O3:K6 (strain RIMD 2210633).